The chain runs to 75 residues: Vacuolar ATPase assembly integral membrane protein VMA21 (75 aa).

The Cytoplasmic segment spans residues 1 to 8; sequence MPVDVAPG. The helical transmembrane segment at 9-29 threads the bilayer; the sequence is VIKKLMFFTAAMVICPLLTFF. Residues 30–41 lie on the Lumenal side of the membrane; it reads SIKQFTTNTIVS. The helical transmembrane segment at 42–62 threads the bilayer; that stretch reads GGLAALAANLVLIGYIVVAFM. The Cytoplasmic segment spans residues 63-75; that stretch reads EDTTDVKAESKKD.

This sequence belongs to the VMA21 family.

Its subcellular location is the endoplasmic reticulum membrane. It is found in the endoplasmic reticulum-Golgi intermediate compartment membrane. The protein localises to the cytoplasmic vesicle. It localises to the COPII-coated vesicle membrane. In terms of biological role, required for the assembly of the V0 complex of the vacuolar ATPase (V-ATPase) in the endoplasmic reticulum. This Vanderwaltozyma polyspora (strain ATCC 22028 / DSM 70294 / BCRC 21397 / CBS 2163 / NBRC 10782 / NRRL Y-8283 / UCD 57-17) (Kluyveromyces polysporus) protein is Vacuolar ATPase assembly integral membrane protein VMA21.